Consider the following 733-residue polypeptide: DNA repair and recombination protein RAD54-like (733 aa).

The interval 1–35 is disordered; sequence LAKRKAGGEEEDGEWRPPATQKRQKAGSEAESADC. The 176-residue stretch at 159-334 folds into the Helicase ATP-binding domain; that stretch reads SRRIPGSHGC…FSLVHFVNSG (176 aa). An ATP-binding site is contributed by 172 to 179; sequence DEMGLGKT. The short motif at 285–288 is the DEGH box element; the sequence is DEGH. In terms of domain architecture, Helicase C-terminal spans 488 to 642; that stretch reads LVLDYILAVT…CVVDEEQDVE (155 aa). Lysine 504 is modified (N6-acetyllysine). Serine 561 carries the phosphoserine; by NEK1 modification.

It belongs to the SNF2/RAD54 helicase family. As to quaternary structure, homohexamer. Interacts (via N-terminus) with RAD51. Interacts with NAP1L1. Interacts with BRD9; this interaction orchestrates RAD51-RAD54 complex formation. Acetylated. Acetylation promotes interaction with BRD9, and subsequently with RAD54, which is essential for homologous recombination (HR). Post-translationally, phosphorylated. Phosphorylation at Ser-561 by NEK1 specifically in G2 phase allows efficient removal of RAD51 filaments from DNA. In terms of tissue distribution, highly expressed in bursa, thymus, testis, and ovary. Low level of expression seen in all other organs tested.

It is found in the nucleus. In terms of biological role, plays an essential role in homologous recombination (HR) which is a major pathway for repairing DNA double-strand breaks (DSBs), single-stranded DNA (ssDNA) gaps, and stalled or collapsed replication forks. Acts as a molecular motor during the homology search and guides RAD51 ssDNA along a donor dsDNA thereby changing the homology search from the diffusion-based mechanism to a motor-guided mechanism. Plays also an essential role in RAD51-mediated synaptic complex formation which consists of three strands encased in a protein filament formed once homology is recognized. Once DNA strand exchange occured, dissociates RAD51 from nucleoprotein filaments formed on dsDNA. This is DNA repair and recombination protein RAD54-like (RAD54L) from Gallus gallus (Chicken).